The chain runs to 403 residues: F-box/kelch-repeat protein At5g39560 (403 aa).

An F-box domain is found at 26–72 (PPSLMSLPYEIIENILARISKWSYPNLSLVSKSFLSLLSSPQLYKTR). Kelch repeat units follow at residues 138 to 182 (EIYV…LIDQ), 184 to 229 (IYVL…VWPN), 248 to 294 (NPNA…IENV), and 296 to 340 (YACH…VNYG).

The sequence is that of F-box/kelch-repeat protein At5g39560 from Arabidopsis thaliana (Mouse-ear cress).